The sequence spans 153 residues: UPF0260 protein YcgN (153 aa).

Belongs to the UPF0260 family.

The chain is UPF0260 protein YcgN from Salmonella typhi.